The following is a 638-amino-acid chain: DNA gyrase subunit B (638 aa).

In terms of domain architecture, Toprim spans 431–545 (RELFIVEGNS…YGFVYIAQPP (115 aa)). Positions 437, 510, and 512 each coordinate Mg(2+).

This sequence belongs to the type II topoisomerase GyrB family. Heterotetramer, composed of two GyrA and two GyrB chains. In the heterotetramer, GyrA contains the active site tyrosine that forms a transient covalent intermediate with DNA, while GyrB binds cofactors and catalyzes ATP hydrolysis. Requires Mg(2+) as cofactor. It depends on Mn(2+) as a cofactor. Ca(2+) serves as cofactor.

The protein resides in the cytoplasm. It carries out the reaction ATP-dependent breakage, passage and rejoining of double-stranded DNA.. Functionally, a type II topoisomerase that negatively supercoils closed circular double-stranded (ds) DNA in an ATP-dependent manner to modulate DNA topology and maintain chromosomes in an underwound state. Negative supercoiling favors strand separation, and DNA replication, transcription, recombination and repair, all of which involve strand separation. Also able to catalyze the interconversion of other topological isomers of dsDNA rings, including catenanes and knotted rings. Type II topoisomerases break and join 2 DNA strands simultaneously in an ATP-dependent manner. The chain is DNA gyrase subunit B from Metamycoplasma arthritidis (Mycoplasma arthritidis).